Reading from the N-terminus, the 87-residue chain is Small ribosomal subunit protein bS20 (87 aa).

The interval 1-28 (MANIKSQQKRNRTNERARLRNKSVKSSL) is disordered.

This sequence belongs to the bacterial ribosomal protein bS20 family.

Binds directly to 16S ribosomal RNA. In Mycobacterium marinum (strain ATCC BAA-535 / M), this protein is Small ribosomal subunit protein bS20.